The primary structure comprises 62 residues: Amolopin-P1 (62 aa).

A signal peptide spans 1 to 22; the sequence is MFPMKKSLLLLFFFGPISLSFC. A propeptide spanning residues 23 to 44 is cleaved from the precursor; the sequence is DQERGADEEENGGEVTEQEVKR.

As to expression, expressed by the skin glands.

It is found in the secreted. Functionally, antimicrobial peptide with activity against Gram-positive bacteria. Has been tested against S.aureus (MIC=37.5 ug/mL), against B.pumilus (MIC=75.0 ug/mL), B.cereus (no activity detected). Does not show activity against Gram-negative bacteria (E.coli, B.dysenteriae, A.calcoaceticus, P.aeruginosa) and fungi (C.albicans). Does not show hemolytic activity against rabbit erythrocytes. The chain is Amolopin-P1 from Amolops loloensis (Lolokou Sucker Frog).